Reading from the N-terminus, the 359-residue chain is AA9 family lytic polysaccharide monooxygenase B (359 aa).

An N-terminal signal peptide occupies residues 1–18; it reads MQLFTSFSLLAVASFASA. Positions 19 and 102 each coordinate Cu(2+). Cystine bridges form between C72/C190 and C113/C117. The N-linked (GlcNAc...) asparagine glycan is linked to N150. O2 is bound by residues H176 and Q185. Y187 contacts Cu(2+). The interval 241–310 is disordered; that stretch reads GGSPGNSAEP…STNINPTSLK (70 aa). Over residues 245–254 the composition is skewed to polar residues; sequence GNSAEPQPQH. Residues 255-304 show a composition bias toward low complexity; that stretch reads TSTAVSTAKTASTSSLTTSVTITSQAPSNTANPPQSITTTTTPKPQSTNI. An N-linked (GlcNAc...) asparagine glycan is attached at N345.

It belongs to the polysaccharide monooxygenase AA9 family. Cu(2+) serves as cofactor.

It localises to the secreted. The enzyme catalyses [(1-&gt;4)-beta-D-glucosyl]n+m + reduced acceptor + O2 = 4-dehydro-beta-D-glucosyl-[(1-&gt;4)-beta-D-glucosyl]n-1 + [(1-&gt;4)-beta-D-glucosyl]m + acceptor + H2O.. In terms of biological role, lytic polysaccharide monooxygenase (LPMO) that depolymerizes crystalline and amorphous polysaccharides via the oxidation of scissile alpha- or beta-(1-4)-glycosidic bonds, yielding C1 and C4 oxidation products. Catalysis by LPMOs requires the reduction of the active-site copper from Cu(II) to Cu(I) by a reducing agent and H(2)O(2) or O(2) as a cosubstrate. Active on cellulose and on xyloglucan for deconstruction of plant biomass. In Geotrichum candidum (Oospora lactis), this protein is AA9 family lytic polysaccharide monooxygenase B.